A 640-amino-acid polypeptide reads, in one-letter code: Threonine--tRNA ligase (640 aa).

One can recognise a TGS domain in the interval 1–61 (MPVITLPDGS…SNDATLQIIT (61 aa)). Residues 242–533 (DHRKIGKQLD…LIEHYAGVFP (292 aa)) form a catalytic region. Zn(2+) is bound by residues Cys-333, His-384, and His-510.

It belongs to the class-II aminoacyl-tRNA synthetase family. In terms of assembly, homodimer. Zn(2+) serves as cofactor.

The protein localises to the cytoplasm. It catalyses the reaction tRNA(Thr) + L-threonine + ATP = L-threonyl-tRNA(Thr) + AMP + diphosphate + H(+). Catalyzes the attachment of threonine to tRNA(Thr) in a two-step reaction: L-threonine is first activated by ATP to form Thr-AMP and then transferred to the acceptor end of tRNA(Thr). Also edits incorrectly charged L-seryl-tRNA(Thr). The protein is Threonine--tRNA ligase of Pseudomonas putida (strain GB-1).